Reading from the N-terminus, the 143-residue chain is Transcriptional regulator SlyA (143 aa).

One can recognise an HTH marR-type domain in the interval 2 to 135; that stretch reads ESTLGSDLAR…LSGLIDKLEK (134 aa). Positions 49–72 form a DNA-binding region, H-T-H motif; it reads QIQLAKAIGIEQPSLVRTLDQLEE.

The protein belongs to the SlyA family. Homodimer.

Transcription regulator that can specifically activate or repress expression of target genes. The chain is Transcriptional regulator SlyA from Yersinia pestis bv. Antiqua (strain Antiqua).